A 156-amino-acid polypeptide reads, in one-letter code: 6,7-dimethyl-8-ribityllumazine synthase (156 aa).

5-amino-6-(D-ribitylamino)uracil-binding positions include phenylalanine 23, 57–59 (AYE), and 81–83 (AII). Residue 86–87 (GT) coordinates (2S)-2-hydroxy-3-oxobutyl phosphate. The Proton donor role is filled by histidine 89. Residue phenylalanine 114 coordinates 5-amino-6-(D-ribitylamino)uracil. Arginine 128 contacts (2S)-2-hydroxy-3-oxobutyl phosphate.

It belongs to the DMRL synthase family.

It catalyses the reaction (2S)-2-hydroxy-3-oxobutyl phosphate + 5-amino-6-(D-ribitylamino)uracil = 6,7-dimethyl-8-(1-D-ribityl)lumazine + phosphate + 2 H2O + H(+). It functions in the pathway cofactor biosynthesis; riboflavin biosynthesis; riboflavin from 2-hydroxy-3-oxobutyl phosphate and 5-amino-6-(D-ribitylamino)uracil: step 1/2. Functionally, catalyzes the formation of 6,7-dimethyl-8-ribityllumazine by condensation of 5-amino-6-(D-ribitylamino)uracil with 3,4-dihydroxy-2-butanone 4-phosphate. This is the penultimate step in the biosynthesis of riboflavin. This chain is 6,7-dimethyl-8-ribityllumazine synthase, found in Helicobacter pylori (strain G27).